We begin with the raw amino-acid sequence, 229 residues long: Lipoprotein-releasing system ATP-binding protein LolD (229 aa).

The ABC transporter domain maps to 6–229 (LELDAIERTY…DGHLTPYVPA (224 aa)). ATP is bound at residue 42 to 49 (GPSGSGKS).

It belongs to the ABC transporter superfamily. Lipoprotein translocase (TC 3.A.1.125) family. In terms of assembly, the complex is composed of two ATP-binding proteins (LolD) and two transmembrane proteins (LolC and LolE).

It is found in the cell inner membrane. Its function is as follows. Part of the ABC transporter complex LolCDE involved in the translocation of mature outer membrane-directed lipoproteins, from the inner membrane to the periplasmic chaperone, LolA. Responsible for the formation of the LolA-lipoprotein complex in an ATP-dependent manner. This chain is Lipoprotein-releasing system ATP-binding protein LolD, found in Maricaulis maris (strain MCS10) (Caulobacter maris).